The sequence spans 508 residues: Lysine--tRNA ligase (508 aa).

Positions 418 and 425 each coordinate Mg(2+).

Belongs to the class-II aminoacyl-tRNA synthetase family. As to quaternary structure, homodimer. The cofactor is Mg(2+).

It is found in the cytoplasm. The catalysed reaction is tRNA(Lys) + L-lysine + ATP = L-lysyl-tRNA(Lys) + AMP + diphosphate. The polypeptide is Lysine--tRNA ligase (Burkholderia cenocepacia (strain HI2424)).